The primary structure comprises 361 residues: Molybdenum import ATP-binding protein ModC (361 aa).

The 235-residue stretch at 1 to 235 (MDGLRLRFRR…VDLPLALDDD (235 aa)) folds into the ABC transporter domain. 33–40 (GHSGSGKS) contacts ATP. In terms of domain architecture, Mop spans 296–361 (QSSILNRLPV…AQIKSVAVLA (66 aa)).

Belongs to the ABC transporter superfamily. Molybdate importer (TC 3.A.1.8) family. As to quaternary structure, the complex is composed of two ATP-binding proteins (ModC), two transmembrane proteins (ModB) and a solute-binding protein (ModA).

It localises to the cell inner membrane. It catalyses the reaction molybdate(out) + ATP + H2O = molybdate(in) + ADP + phosphate + H(+). Part of the ABC transporter complex ModABC involved in molybdenum import. Responsible for energy coupling to the transport system. This Pseudomonas aeruginosa (strain ATCC 15692 / DSM 22644 / CIP 104116 / JCM 14847 / LMG 12228 / 1C / PRS 101 / PAO1) protein is Molybdenum import ATP-binding protein ModC.